A 387-amino-acid polypeptide reads, in one-letter code: Xylose isomerase (387 aa).

Active-site residues include H53 and D56. E180, E216, H219, D244, D254, D256, and D286 together coordinate Mg(2+).

Belongs to the xylose isomerase family. Homotetramer. Mg(2+) is required as a cofactor.

Its subcellular location is the cytoplasm. The enzyme catalyses alpha-D-xylose = alpha-D-xylulofuranose. This chain is Xylose isomerase (xylA), found in Thermus caldophilus.